Consider the following 117-residue polypeptide: Large ribosomal subunit protein bL20 (117 aa).

The protein belongs to the bacterial ribosomal protein bL20 family.

Its function is as follows. Binds directly to 23S ribosomal RNA and is necessary for the in vitro assembly process of the 50S ribosomal subunit. It is not involved in the protein synthesizing functions of that subunit. In Campylobacter fetus subsp. fetus (strain 82-40), this protein is Large ribosomal subunit protein bL20.